The sequence spans 51 residues: Large ribosomal subunit protein eL39 (51 aa).

It belongs to the eukaryotic ribosomal protein eL39 family.

In Pyrococcus horikoshii (strain ATCC 700860 / DSM 12428 / JCM 9974 / NBRC 100139 / OT-3), this protein is Large ribosomal subunit protein eL39 (rpl39e).